Here is a 338-residue protein sequence, read N- to C-terminus: MAKWGEGDPRWIVEERADATNVNNWHWTERDASNWSTEKLKTLFLAVRVENEEGKCEVTEVNKLDGEASINNRKGKLIFFYEWTIKLNWTGTSKSGVQYKGHVEIPNLSDENSVDEVEISVSLAKDEPDTNLVALMKEDGVKLLREAVGIYISTLKTEFTQGMILPTVNGESVDPVGQPALKTETCKAKSAPSKSQAKPVGVKIPTCKITLKETFLTSPEELYRVFTTQELVQAFTHAPAALEADRGGKFHMVDGNVTGEFTDLVPEKHIAMKWRFKSWPEGHFATITLTFIDKNGETELCMEGRGIPAPEEERTRQGWQRYYFEGIKQTFGYGARLF.

Lys3 carries the post-translational modification N6-acetyllysine. A Glycyl lysine isopeptide (Lys-Gly) (interchain with G-Cter in SUMO1) cross-link involves residue Lys182. The residue at position 193 (Ser193) is a Phosphoserine. Residue Lys203 forms a Glycyl lysine isopeptide (Lys-Gly) (interchain with G-Cter in SUMO2) linkage. Lys212 bears the N6-acetyllysine mark. The residue at position 223 (Tyr223) is a Phosphotyrosine; by ABL.

Belongs to the AHA1 family. As to quaternary structure, interacts with HSPCA/HSP90. Interacts with HSP90AA1; the interaction activates HSP90AA1 ATPase activity. Interacts with HSP90AB1. Interacts with GCH1. Interacts with SRPK1. Interacts with FLCN. Post-translationally, phosphorylation at Tyr-223 enhances binding to chaperone HSP90AA1.

It localises to the cytoplasm. The protein localises to the cytosol. The protein resides in the endoplasmic reticulum. Acts as a co-chaperone of HSP90AA1. Activates the ATPase activity of HSP90AA1 leading to increase in its chaperone activity. Competes with the inhibitory co-chaperone FNIP1 for binding to HSP90AA1, thereby providing a reciprocal regulatory mechanism for chaperoning of client proteins. Competes with the inhibitory co-chaperone TSC1 for binding to HSP90AA1, thereby providing a reciprocal regulatory mechanism for chaperoning of client proteins. The sequence is that of Activator of 90 kDa heat shock protein ATPase homolog 1 (Ahsa1) from Mus musculus (Mouse).